The primary structure comprises 311 residues: MRKIIVGSRRSKLALTQTNWVIERLRQLGAPFEFEVKEIVTKGDKIIDVTLSKVGGKGLFVKEIEHAMLNGEIDMAVHSMKDMPAVLPDGLIIGCVPPREDHHDVLISKNKETFANLPSGAIVGTSSLRRSAQILAKRPDLKIKWIRGNIDTRLAKLQNEDYDAIILAAAGLVRMGWARDVITEYLSTDVCLPAVGQGALAVECRENDEELREWLQKLNDVHTERAVLAERVFLQQMEGGCQVPIAGYAYIDDREDIVLTALVASPDGKEIYKETVSGSNPEEVGTNAAKMLIERGAKALIDRIKEEMNRQ.

Position 241 is an S-(dipyrrolylmethanemethyl)cysteine (C241).

This sequence belongs to the HMBS family. As to quaternary structure, monomer. Dipyrromethane is required as a cofactor.

It catalyses the reaction 4 porphobilinogen + H2O = hydroxymethylbilane + 4 NH4(+). The protein operates within porphyrin-containing compound metabolism; protoporphyrin-IX biosynthesis; coproporphyrinogen-III from 5-aminolevulinate: step 2/4. Functionally, tetrapolymerization of the monopyrrole PBG into the hydroxymethylbilane pre-uroporphyrinogen in several discrete steps. This is Porphobilinogen deaminase from Geobacillus sp. (strain WCH70).